The chain runs to 422 residues: Transcription initiation factor TFIID subunit 15b (422 aa).

Disordered stretches follow at residues 1–24, 47–94, 111–263, and 368–422; these read MAGM…DGYG, YGGR…PNPS, ALAP…DAAT, and MAEK…SRPY. Composition is skewed to gly residues over residues 8 to 24 and 47 to 83; these read DGGG…DGYG and YGGR…GGGG. The RanBP2-type zinc finger occupies 84–115; it reads RDGDWRCPNPSCGNVNFARRVECNKCGALAPS. A compositionally biased stretch (gly residues) spans 123-133; that stretch reads DRGGGGYSRGG. Residues 134 to 156 are compositionally biased toward basic and acidic residues; it reads GDSDRGGGRGGRNDSGRSYESSR. Gly residues-rich tracts occupy residues 219 to 229 and 236 to 247; these read PSYGGPRGGYG and GGRGGRSGGYDG. Residues 252 to 263 are compositionally biased toward basic and acidic residues; that stretch reads RRQEASYEDAAT. Positions 280-371 constitute an RRM domain; it reads ARIYISNLPP…NKISVTMAEK (92 aa). The segment covering 382–397 has biased composition (gly residues); the sequence is RGGGRGGGGGGYGGGG.

It belongs to the TAF15 family. Component of the TFIID complex. TFIID is composed of TATA binding protein (TBP) and a number of TBP-associated factors (TAFs) whose MWs range from 14-217 kDa. Interacts with TAF4, TAF4B, TAF5, TAF12B and TAF14. Expressed in roots, leaves and inflorescences.

The protein resides in the nucleus. Functionally, TAFs are components of the transcription factor IID (TFIID) complex that is essential for mediating regulation of RNA polymerase transcription. This is Transcription initiation factor TFIID subunit 15b (TAF15B) from Arabidopsis thaliana (Mouse-ear cress).